Consider the following 274-residue polypeptide: Thiamine kinase (274 aa).

This sequence belongs to the thiamine kinase family.

It catalyses the reaction thiamine + ATP = thiamine phosphate + ADP + H(+). It participates in cofactor biosynthesis; thiamine diphosphate biosynthesis; thiamine phosphate from thiamine: step 1/1. Its function is as follows. Catalyzes the ATP-dependent phosphorylation of thiamine to thiamine phosphate. Is involved in thiamine salvage. This is Thiamine kinase from Escherichia coli O6:K15:H31 (strain 536 / UPEC).